A 122-amino-acid polypeptide reads, in one-letter code: Probable transcription factor PqrA (122 aa).

The region spanning 7 to 107 (NDILKWLETQ…NTTPAKFREN (101 aa)) is the HTH araC/xylS-type domain. 2 DNA-binding regions (H-T-H motif) span residues 26-47 (DTIA…KDFK) and 74-97 (ILDI…KKHF).

Its function is as follows. Upon expression in E.coli strain KY2563 confers resistance to antibiotics ofloxacin, ciprofloxacin, tetracycline, chloramphenicol, and ceftazidime (increases minimal inhibitory concentration by 8-32 times); also decreases expression of OmpF. The sequence is that of Probable transcription factor PqrA from Proteus vulgaris.